Consider the following 570-residue polypeptide: Urease subunit alpha (570 aa).

A Urease domain is found at 132-570 (GGFDSHIHYI…LPLAQRYFLF (439 aa)). H137, H139, and K220 together coordinate Ni(2+). K220 carries the N6-carboxylysine modification. H222 lines the substrate pocket. Ni(2+) is bound by residues H249 and H275. Catalysis depends on H323, which acts as the Proton donor. D363 contributes to the Ni(2+) binding site.

This sequence belongs to the metallo-dependent hydrolases superfamily. Urease alpha subunit family. As to quaternary structure, heterotrimer of UreA (gamma), UreB (beta) and UreC (alpha) subunits. Three heterotrimers associate to form the active enzyme. Ni cation is required as a cofactor. Carboxylation allows a single lysine to coordinate two nickel ions.

It is found in the cytoplasm. It catalyses the reaction urea + 2 H2O + H(+) = hydrogencarbonate + 2 NH4(+). The protein operates within nitrogen metabolism; urea degradation; CO(2) and NH(3) from urea (urease route): step 1/1. This chain is Urease subunit alpha, found in Ruegeria sp. (strain TM1040) (Silicibacter sp.).